The following is a 204-amino-acid chain: Thymidylate kinase (204 aa).

11–18 (GLDKSGKT) provides a ligand contact to ATP.

The protein belongs to the thymidylate kinase family.

The catalysed reaction is dTMP + ATP = dTDP + ADP. It functions in the pathway pyrimidine metabolism; dTTP biosynthesis. This chain is Thymidylate kinase (TMK), found in Bos taurus (Bovine).